The primary structure comprises 50 residues: Sperm protamine P1 (50 aa).

The protein belongs to the protamine P1 family. In terms of assembly, cross-linked by interchain disulfide bonds around the DNA-helix. As to expression, testis.

The protein localises to the nucleus. The protein resides in the chromosome. Its function is as follows. Protamines substitute for histones in the chromatin of sperm during the haploid phase of spermatogenesis. They compact sperm DNA into a highly condensed, stable and inactive complex. This is Sperm protamine P1 (PRM1) from Pan paniscus (Pygmy chimpanzee).